Consider the following 526-residue polypeptide: MSFQQEVSKRRTFAIISHPDAGKTTITEKVLLFGNAIQKAGTVKGRGSNQHAKSDWMEMEKERGISVTTSVMQFPYNDCLVNLLDTPGHEDFSEDTYRTLTAVDSCLMVIDAAKGVEDRTRKLMEVTRLRDTPIVTFMNKLDRDVRDPMEVLDEVESELGMACAPISWPIGCGKEFKGVYHIHRDETILYESGHGHEIQEVRIIKGLDNPELDEAVGEDLASSVREELELVIGACPEFDHELFLAGELTPVYFGTALGNFGVDHMLDGLTRWAPAPQTRQANERDVEATEEKFSGFVFKIQANMDPKHRDRIAFMRIVSGTYDQGMKMNHVRTGKNVSISDAVTFMAGDRARAEKAYAGDIIGLHNHGTIQIGDTFTQGESLKFAGIPNFAPELFRRIRLRDPLKQKQLLKGLVQLSEEGAVQVFRPLQNNDLIVGAVGVLQFDVVVARLKAEYNVEAIYEGVNVATARWVECDDAKKLEEFKRKSQANLALDGGDNLSYIAPTMVNLNLASERFPEVQFRATREH.

One can recognise a tr-type G domain in the interval 8 to 277; that stretch reads SKRRTFAIIS…GLTRWAPAPQ (270 aa). GTP is bound by residues 17 to 24, 85 to 89, and 139 to 142; these read SHPDAGKT, DTPGH, and NKLD.

The protein belongs to the TRAFAC class translation factor GTPase superfamily. Classic translation factor GTPase family. PrfC subfamily.

The protein localises to the cytoplasm. Its function is as follows. Increases the formation of ribosomal termination complexes and stimulates activities of RF-1 and RF-2. It binds guanine nucleotides and has strong preference for UGA stop codons. It may interact directly with the ribosome. The stimulation of RF-1 and RF-2 is significantly reduced by GTP and GDP, but not by GMP. The polypeptide is Peptide chain release factor 3 (Vibrio atlanticus (strain LGP32) (Vibrio splendidus (strain Mel32))).